A 428-amino-acid chain; its full sequence is Light-independent protochlorophyllide reductase subunit N (428 aa).

3 residues coordinate [4Fe-4S] cluster: C31, C56, and C117.

It belongs to the BchN/ChlN family. As to quaternary structure, protochlorophyllide reductase is composed of three subunits; BchL, BchN and BchB. Forms a heterotetramer of two BchB and two BchN subunits. It depends on [4Fe-4S] cluster as a cofactor.

The catalysed reaction is chlorophyllide a + oxidized 2[4Fe-4S]-[ferredoxin] + 2 ADP + 2 phosphate = protochlorophyllide a + reduced 2[4Fe-4S]-[ferredoxin] + 2 ATP + 2 H2O. It functions in the pathway porphyrin-containing compound metabolism; bacteriochlorophyll biosynthesis (light-independent). Component of the dark-operative protochlorophyllide reductase (DPOR) that uses Mg-ATP and reduced ferredoxin to reduce ring D of protochlorophyllide (Pchlide) to form chlorophyllide a (Chlide). This reaction is light-independent. The NB-protein (BchN-BchB) is the catalytic component of the complex. The polypeptide is Light-independent protochlorophyllide reductase subunit N (Rhodopseudomonas palustris (strain BisB5)).